Here is a 309-residue protein sequence, read N- to C-terminus: Fe-S cluster assembly protein dre2 (309 aa).

Residues 1-132 (MTTTIVLASP…LRRPAQVEAV (132 aa)) are N-terminal SAM-like domain. Residues 133–195 (PLKLSTKKSA…DALVSDEETQ (63 aa)) form a linker region. Cys207, Cys216, Cys219, and Cys221 together coordinate [2Fe-2S] cluster. The interval 207 to 221 (CSKPGKKKRCKNCTC) is fe-S binding site A. Residues Cys265, Cys268, Cys276, and Cys279 each contribute to the [4Fe-4S] cluster site. 2 short sequence motifs (cx2C motif) span residues 265–268 (CGSC) and 276–279 (CSGC). The interval 265–279 (CGSCYLGDAFRCSGC) is fe-S binding site B.

The protein belongs to the anamorsin family. In terms of assembly, monomer. Interacts with TAH18. Interacts with MIA40. Requires [2Fe-2S] cluster as cofactor. The cofactor is [4Fe-4S] cluster.

It is found in the cytoplasm. The protein resides in the mitochondrion intermembrane space. Its function is as follows. Component of the cytosolic iron-sulfur (Fe-S) protein assembly (CIA) machinery required for the maturation of extramitochondrial Fe-S proteins. Part of an electron transfer chain functioning in an early step of cytosolic Fe-S biogenesis, facilitating the de novo assembly of a [4Fe-4S] cluster on the scaffold complex CFD1-NBP35. Electrons are transferred to DRE2 from NADPH via the FAD- and FMN-containing protein TAH18. TAH18-DRE2 are also required for the assembly of the diferric tyrosyl radical cofactor of ribonucleotide reductase (RNR), probably by providing electrons for reduction during radical cofactor maturation in the catalytic small subunit RNR2. The chain is Fe-S cluster assembly protein dre2 from Schizosaccharomyces japonicus (strain yFS275 / FY16936) (Fission yeast).